Here is a 476-residue protein sequence, read N- to C-terminus: Sulfate adenylyltransferase subunit 1 (476 aa).

One can recognise a tr-type G domain in the interval 24–238; it reads KSLLRFLTCG…ELLEYVDIDR (215 aa). The segment at 33–40 is G1; it reads GSVDDGKS. Residue 33 to 40 coordinates GTP; it reads GSVDDGKS. The tract at residues 91-95 is G2; the sequence is GITID. Residues 112–115 form a G3 region; it reads DTPG. GTP contacts are provided by residues 112 to 116 and 167 to 170; these read DTPGH and NKMD. Positions 167 to 170 are G4; it reads NKMD. The tract at residues 205–207 is G5; it reads SAL.

It belongs to the TRAFAC class translation factor GTPase superfamily. Classic translation factor GTPase family. CysN/NodQ subfamily. In terms of assembly, heterodimer composed of CysD, the smaller subunit, and CysN.

The catalysed reaction is sulfate + ATP + H(+) = adenosine 5'-phosphosulfate + diphosphate. It participates in sulfur metabolism; hydrogen sulfide biosynthesis; sulfite from sulfate: step 1/3. Functionally, with CysD forms the ATP sulfurylase (ATPS) that catalyzes the adenylation of sulfate producing adenosine 5'-phosphosulfate (APS) and diphosphate, the first enzymatic step in sulfur assimilation pathway. APS synthesis involves the formation of a high-energy phosphoric-sulfuric acid anhydride bond driven by GTP hydrolysis by CysN coupled to ATP hydrolysis by CysD. The chain is Sulfate adenylyltransferase subunit 1 from Vibrio cholerae serotype O1 (strain M66-2).